A 160-amino-acid chain; its full sequence is Peptide deformylase 1 (160 aa).

2 residues coordinate Fe cation: C90 and H132. E133 is an active-site residue. H136 is a Fe cation binding site.

Belongs to the polypeptide deformylase family. Requires Fe(2+) as cofactor.

It catalyses the reaction N-terminal N-formyl-L-methionyl-[peptide] + H2O = N-terminal L-methionyl-[peptide] + formate. Its function is as follows. Removes the formyl group from the N-terminal Met of newly synthesized proteins. Requires at least a dipeptide for an efficient rate of reaction. N-terminal L-methionine is a prerequisite for activity but the enzyme has broad specificity at other positions. This is Peptide deformylase 1 (defA) from Bacillus subtilis (strain 168).